The sequence spans 159 residues: MAAAAAAAGGAALAVSTGLETATLQKLALRRKKVLGAEEMELYELAQAAGAAIDPDVFKILVDLLNLNVAPLAVFQMLKSMCAGQRLASDPQDSVPISLSTSTSETRGRNRGGPILGNVTISAERGSRERPIQRMPRQPSATRLPKVGGSGKSNSRSSP.

The tract at residues 87-159 (LASDPQDSVP…SGKSNSRSSP (73 aa)) is disordered. Residues 91–105 (PQDSVPISLSTSTSE) are compositionally biased toward polar residues. Arginine 111 bears the Omega-N-methylarginine mark. The residue at position 153 (serine 153) is a Phosphoserine.

It belongs to the MOZART2 family. In terms of assembly, associates with the gamma-tubulin ring complex (gTuRC) consisting of TUBGCP2, TUBGCP3, TUBGCP4, TUBGCP5 and TUBGCP6 and gamma-tubulin TUBG1 or TUBG2; within the complex, interacts with TUBGCP2; the interaction plays a role in gTuRC activation.

It localises to the cytoplasm. Its subcellular location is the cytoskeleton. The protein localises to the microtubule organizing center. The protein resides in the centrosome. It is found in the spindle. Functionally, required for the recruitment and the assembly of the gamma-tubulin ring complex (gTuRC) at the centrosome. The gTuRC regulates the minus-end nucleation of alpha-beta tubulin heterodimers that grow into microtubule protafilaments, a critical step in centrosome duplication and spindle formation. The chain is Mitotic-spindle organizing protein 2 (Mzt2) from Mus musculus (Mouse).